A 1463-amino-acid chain; its full sequence is Kinesin-like protein KIF15 (1463 aa).

One can recognise a Kinesin motor domain in the interval 18–354 (AIKVFVRVRP…LKFARRAKMI (337 aa)). 99 to 106 (GQTGSGKT) is an ATP binding site. Positions 387-424 (AEGSIPRGPSESGDSQMSNSSTESNGPVSGQQSGSSSS) are disordered. Residues 398–414 (SGDSQMSNSSTESNGPV) are compositionally biased toward polar residues. Low complexity predominate over residues 415–424 (SGQQSGSSSS). 2 coiled-coil regions span residues 436–517 (SLRD…LEHN) and 586–646 (TSTL…QGMK). 3 disordered regions span residues 686-720 (AGEE…SGDI), 1335-1356 (FKEK…SKLT), and 1409-1444 (QLGK…EAGA). Residues 701-715 (DNGSPLRSHSTNSLP) are compositionally biased toward polar residues. The segment covering 1418-1428 (EQMKRDYEALQ) has biased composition (basic and acidic residues).

This sequence belongs to the TRAFAC class myosin-kinesin ATPase superfamily. Kinesin family. KLP2 subfamily. As to quaternary structure, homodimer.

Its subcellular location is the cytoplasm. It is found in the cytoskeleton. It localises to the spindle. In terms of biological role, plus-end directed kinesin-like motor enzyme involved in mitotic spindle assembly. Plays a role in positioning spindle poles during mitosis, specifically at prometaphase. In Strongylocentrotus purpuratus (Purple sea urchin), this protein is Kinesin-like protein KIF15 (KIF15).